A 288-amino-acid polypeptide reads, in one-letter code: UDP-3-O-acyl-N-acetylglucosamine deacetylase (288 aa).

Zn(2+) contacts are provided by histidine 79, histidine 236, and aspartate 240. The active-site Proton donor is the histidine 263.

This sequence belongs to the LpxC family. Zn(2+) is required as a cofactor.

The enzyme catalyses a UDP-3-O-[(3R)-3-hydroxyacyl]-N-acetyl-alpha-D-glucosamine + H2O = a UDP-3-O-[(3R)-3-hydroxyacyl]-alpha-D-glucosamine + acetate. It functions in the pathway glycolipid biosynthesis; lipid IV(A) biosynthesis; lipid IV(A) from (3R)-3-hydroxytetradecanoyl-[acyl-carrier-protein] and UDP-N-acetyl-alpha-D-glucosamine: step 2/6. In terms of biological role, catalyzes the hydrolysis of UDP-3-O-myristoyl-N-acetylglucosamine to form UDP-3-O-myristoylglucosamine and acetate, the committed step in lipid A biosynthesis. This chain is UDP-3-O-acyl-N-acetylglucosamine deacetylase, found in Rickettsia felis (strain ATCC VR-1525 / URRWXCal2) (Rickettsia azadi).